The primary structure comprises 365 residues: DNA replication and repair protein RecF (365 aa).

30–37 (GRNAQGKT) is a binding site for ATP.

This sequence belongs to the RecF family.

Its subcellular location is the cytoplasm. Its function is as follows. The RecF protein is involved in DNA metabolism; it is required for DNA replication and normal SOS inducibility. RecF binds preferentially to single-stranded, linear DNA. It also seems to bind ATP. This Streptococcus pneumoniae (strain CGSP14) protein is DNA replication and repair protein RecF.